The chain runs to 80 residues: Toxin-like peptide AaF1CA1 (80 aa).

A signal peptide spans 1–22; sequence MMKLVLFSVIVILFSLIGSIHG. Residues 25-80 enclose the LCN-type CS-alpha/beta domain; it reads VPGNYPLRPFRYRYGCAVPGDSDYCVRVCRKHGVRYGYCWFFTCWCEYLEDKNIKI. 3 cysteine pairs are disulfide-bonded: C40–C63, C49–C68, and C53–C70.

Belongs to the long (3 C-C) scorpion toxin superfamily. Expressed by the venom gland.

Its subcellular location is the secreted. Functionally, probable ion channel inhibitor. This chain is Toxin-like peptide AaF1CA1, found in Androctonus australis (Sahara scorpion).